The sequence spans 68 residues: Large ribosomal subunit protein uL29 (68 aa).

The protein belongs to the universal ribosomal protein uL29 family.

This Streptococcus pneumoniae (strain JJA) protein is Large ribosomal subunit protein uL29.